Reading from the N-terminus, the 422-residue chain is Protein FAM53B (422 aa).

6 positions are modified to phosphoserine: Ser-118, Ser-167, Ser-169, Ser-179, Ser-212, and Ser-268. Residues 245–268 (SANSTPASTPELARRSSGLSRSRS) show a composition bias toward low complexity. A disordered region spans residues 245–269 (SANSTPASTPELARRSSGLSRSRSQ). The short motif at 281–284 (KRRR) is the Nuclear localization signal element.

Belongs to the FAM53 family. As to quaternary structure, interacts with CTNNB1. As to expression, detected in skeletal muscle, kidney, spleen, thyroid, testis, ovary, small intestine, colon and peripheral blood.

It localises to the nucleus. Functionally, acts as a regulator of Wnt signaling pathway by regulating beta-catenin (CTNNB1) nuclear localization. The protein is Protein FAM53B of Homo sapiens (Human).